The chain runs to 83 residues: Putative defensin-like protein 150 (83 aa).

The N-terminal stretch at 1-25 (MMGKHIQLSFAILIMFTIFVLGAVG) is a signal peptide. 4 disulfides stabilise this stretch: cysteine 35/cysteine 83, cysteine 44/cysteine 64, cysteine 49/cysteine 77, and cysteine 53/cysteine 79.

Belongs to the DEFL family.

The protein localises to the secreted. This chain is Putative defensin-like protein 150 (LCR32), found in Arabidopsis thaliana (Mouse-ear cress).